Reading from the N-terminus, the 228-residue chain is Death domain-containing membrane protein NRADD (228 aa).

The Extracellular portion of the chain corresponds to 1–52; that stretch reads MLHNVSKGVVYSDTALKGQDGDREGMWVGAGGALAPNTSSLFPPEPPGASSN. N-linked (GlcNAc...) asparagine glycosylation is found at Asn-4 and Asn-37. Residues 53-73 form a helical; Signal-anchor for type III membrane protein membrane-spanning segment; that stretch reads IIPVYCALLATVVLGLLAYVA. Residues 74–228 are Cytoplasmic-facing; that stretch reads FKCWRSRKQR…SSPAEGCSVV (155 aa). A Death domain is found at 143 to 222; the sequence is EEVQRLLILG…DVVQVLSSPA (80 aa).

In terms of assembly, interacts with NTRK1. Isoform 1 and isoform 2 interact with NGFR. Interacts with SORT1. Isoform 1 is N-glycosylated. Isoform 2 is not N-glycosylated. Detected in embryo, including embryonic brain. Detected at very low levels in adult testis, spleen, thymus and lung.

The protein localises to the cell membrane. The protein resides in the nucleus. In terms of biological role, modulates NTRK1 signaling. Can activate several intracellular signaling pathways, leading to activation of JUN. Promotes translocation of SORT1 to the cell membrane, and thereby hinders lysosomal degradation of SOTR1 and promotes its interaction with NGFR. Both isoform 1 and isoform 2 promote apoptosis. The sequence is that of Death domain-containing membrane protein NRADD (Nradd) from Rattus norvegicus (Rat).